The sequence spans 838 residues: Probable glucan 1,3-beta-glucosidase D (838 aa).

A compositionally biased stretch (basic and acidic residues) spans 1–23 (MPSHSRSRDRYRGRDESEPERDR). The tract at residues 1–298 (MPSHSRSRDR…GASDSDMDGA (298 aa)) is disordered. The Cytoplasmic portion of the chain corresponds to 1 to 310 (MPSHSRSRDR…GTPFWKKKKT (310 aa)). A compositionally biased stretch (acidic residues) spans 35 to 45 (DYEDDELDDDD). Basic and acidic residues-rich tracts occupy residues 111 to 124 (DSPRRRDRHRDGDR), 149 to 164 (SRDDRRERAYESEREA), 200 to 221 (AKLRSEYDKEDRSRAKADAKAE), and 234 to 246 (QPRRLDPFPEETP). The helical; Signal-anchor for type II membrane protein transmembrane segment at 311-331 (WIAVGVVVVLLAIIIPVAVVV) threads the bilayer. At 332–838 (SKKNNEKKSD…PDFGDLPENY (507 aa)) the chain is on the extracellular side. The disordered stretch occupies residues 335–359 (NNEKKSDSTTDDTTPRNSNLDGISR). Asparagine 383, asparagine 388, asparagine 400, asparagine 553, and asparagine 565 each carry an N-linked (GlcNAc...) asparagine glycan. Residue glutamate 604 is the Proton donor of the active site. N-linked (GlcNAc...) asparagine glycosylation is found at asparagine 643 and asparagine 696. Glutamate 709 serves as the catalytic Nucleophile.

The protein belongs to the glycosyl hydrolase 5 (cellulase A) family.

The protein resides in the cell membrane. The catalysed reaction is Successive hydrolysis of beta-D-glucose units from the non-reducing ends of (1-&gt;3)-beta-D-glucans, releasing alpha-glucose.. Functionally, glucosidase involved in the degradation of cellulosic biomass. Active on lichenan. The protein is Probable glucan 1,3-beta-glucosidase D (exgD) of Aspergillus terreus (strain NIH 2624 / FGSC A1156).